The sequence spans 346 residues: UPF0718 protein YraQ (346 aa).

9 helical membrane passes run 12–32, 71–91, 113–133, 146–166, 167–187, 223–243, 260–280, 296–316, and 326–346; these read PIQW…LWYV, MIYF…GSLI, LLGT…APVA, ALAF…FMGF, VLGW…VLLI, ALWT…LVLG, SLMW…PTAA, APAL…LIML, and WLTG…ALLF.

The protein belongs to the UPF0718 family.

Its subcellular location is the cell membrane. The sequence is that of UPF0718 protein YraQ (yraQ) from Escherichia coli (strain K12).